Consider the following 441-residue polypeptide: 3-phosphoshikimate 1-carboxyvinyltransferase (441 aa).

The span at 1-10 (MSVTSTASSS) shows a compositional bias: polar residues. The tract at residues 1–21 (MSVTSTASSSRELRAGGGLSG) is disordered. 3-phosphoshikimate is bound by residues Lys29, Ser30, and Arg34. Residue Lys29 coordinates phosphoenolpyruvate. Phosphoenolpyruvate-binding residues include Gly103 and Arg132. Residues Ser177, Gln179, Asp328, and Lys355 each coordinate 3-phosphoshikimate. Residue Gln179 participates in phosphoenolpyruvate binding. Asp328 functions as the Proton acceptor in the catalytic mechanism. Phosphoenolpyruvate contacts are provided by Arg359 and Arg401.

It belongs to the EPSP synthase family. Monomer.

The protein resides in the cytoplasm. The catalysed reaction is 3-phosphoshikimate + phosphoenolpyruvate = 5-O-(1-carboxyvinyl)-3-phosphoshikimate + phosphate. The protein operates within metabolic intermediate biosynthesis; chorismate biosynthesis; chorismate from D-erythrose 4-phosphate and phosphoenolpyruvate: step 6/7. Catalyzes the transfer of the enolpyruvyl moiety of phosphoenolpyruvate (PEP) to the 5-hydroxyl of shikimate-3-phosphate (S3P) to produce enolpyruvyl shikimate-3-phosphate and inorganic phosphate. The polypeptide is 3-phosphoshikimate 1-carboxyvinyltransferase (Prochlorococcus marinus (strain MIT 9303)).